The primary structure comprises 330 residues: Peptide transport system ATP-binding protein SapD (330 aa).

The ABC transporter domain occupies 6–259 (IRNLTIEFKT…PHHPYTQALI (254 aa)). 40 to 47 (GESGSGKS) is an ATP binding site.

The protein belongs to the ABC transporter superfamily.

The protein resides in the cell inner membrane. Functionally, involved in a peptide intake transport system that plays a role in the resistance to antimicrobial peptides. The sequence is that of Peptide transport system ATP-binding protein SapD (sapD) from Escherichia coli O157:H7.